The following is a 150-amino-acid chain: Transcriptional repressor NrdR (150 aa).

The segment at 3 to 34 (CPFCNASDTKVVDTRASEDDKIVRRRRECISC) is a zinc-finger region. An ATP-cone domain is found at 49 to 139 (LTVVKKDKNR…VYREFTDVKS (91 aa)).

It belongs to the NrdR family. Zn(2+) serves as cofactor.

In terms of biological role, negatively regulates transcription of bacterial ribonucleotide reductase nrd genes and operons by binding to NrdR-boxes. The sequence is that of Transcriptional repressor NrdR from Finegoldia magna (strain ATCC 29328 / DSM 20472 / WAL 2508) (Peptostreptococcus magnus).